A 242-amino-acid chain; its full sequence is Ubiquinone biosynthesis O-methyltransferase (242 aa).

Residues arginine 44, glycine 64, aspartate 85, and methionine 129 each contribute to the S-adenosyl-L-methionine site.

The protein belongs to the methyltransferase superfamily. UbiG/COQ3 family.

The catalysed reaction is a 3-demethylubiquinol + S-adenosyl-L-methionine = a ubiquinol + S-adenosyl-L-homocysteine + H(+). The enzyme catalyses a 3-(all-trans-polyprenyl)benzene-1,2-diol + S-adenosyl-L-methionine = a 2-methoxy-6-(all-trans-polyprenyl)phenol + S-adenosyl-L-homocysteine + H(+). The protein operates within cofactor biosynthesis; ubiquinone biosynthesis. Functionally, O-methyltransferase that catalyzes the 2 O-methylation steps in the ubiquinone biosynthetic pathway. The protein is Ubiquinone biosynthesis O-methyltransferase of Salmonella typhi.